A 344-amino-acid chain; its full sequence is Succinylglutamate desuccinylase (344 aa).

Residues His63, Glu66, and His160 each coordinate Zn(2+). Residue Glu224 is part of the active site.

The protein belongs to the AspA/AstE family. Succinylglutamate desuccinylase subfamily. The cofactor is Zn(2+).

The enzyme catalyses N-succinyl-L-glutamate + H2O = L-glutamate + succinate. The protein operates within amino-acid degradation; L-arginine degradation via AST pathway; L-glutamate and succinate from L-arginine: step 5/5. Functionally, transforms N(2)-succinylglutamate into succinate and glutamate. In Shewanella sp. (strain MR-4), this protein is Succinylglutamate desuccinylase.